A 157-amino-acid polypeptide reads, in one-letter code: UPF0178 protein BH1374 (157 aa).

The protein belongs to the UPF0178 family.

This Halalkalibacterium halodurans (strain ATCC BAA-125 / DSM 18197 / FERM 7344 / JCM 9153 / C-125) (Bacillus halodurans) protein is UPF0178 protein BH1374.